We begin with the raw amino-acid sequence, 102 residues long: Urease subunit beta (102 aa).

It belongs to the urease beta subunit family. In terms of assembly, heterotrimer of UreA (gamma), UreB (beta) and UreC (alpha) subunits. Three heterotrimers associate to form the active enzyme.

The protein resides in the cytoplasm. The catalysed reaction is urea + 2 H2O + H(+) = hydrogencarbonate + 2 NH4(+). It functions in the pathway nitrogen metabolism; urea degradation; CO(2) and NH(3) from urea (urease route): step 1/1. This chain is Urease subunit beta, found in Bordetella parapertussis (strain 12822 / ATCC BAA-587 / NCTC 13253).